Reading from the N-terminus, the 69-residue chain is Putative membrane protein insertion efficiency factor (69 aa).

This sequence belongs to the UPF0161 family.

Its subcellular location is the cell inner membrane. Could be involved in insertion of integral membrane proteins into the membrane. This is Putative membrane protein insertion efficiency factor from Chromobacterium violaceum (strain ATCC 12472 / DSM 30191 / JCM 1249 / CCUG 213 / NBRC 12614 / NCIMB 9131 / NCTC 9757 / MK).